The primary structure comprises 209 residues: Small ribosomal subunit protein uS3 (209 aa).

One can recognise a KH type-2 domain in the interval 38-107; the sequence is IRKIIKNKYY…RVVINIEEIK (70 aa).

This sequence belongs to the universal ribosomal protein uS3 family. In terms of assembly, part of the 30S ribosomal subunit. Forms a tight complex with proteins S10 and S14.

Its function is as follows. Binds the lower part of the 30S subunit head. Binds mRNA in the 70S ribosome, positioning it for translation. The protein is Small ribosomal subunit protein uS3 of Thermotoga maritima (strain ATCC 43589 / DSM 3109 / JCM 10099 / NBRC 100826 / MSB8).